Consider the following 188-residue polypeptide: Elongation factor P (188 aa).

It belongs to the elongation factor P family.

It is found in the cytoplasm. It participates in protein biosynthesis; polypeptide chain elongation. Involved in peptide bond synthesis. Stimulates efficient translation and peptide-bond synthesis on native or reconstituted 70S ribosomes in vitro. Probably functions indirectly by altering the affinity of the ribosome for aminoacyl-tRNA, thus increasing their reactivity as acceptors for peptidyl transferase. The sequence is that of Elongation factor P from Paramagnetospirillum magneticum (strain ATCC 700264 / AMB-1) (Magnetospirillum magneticum).